The sequence spans 869 residues: H(+)/Cl(-) exchange transporter 6 (869 aa).

Residues 1–80 are Cytoplasmic-facing; the sequence is MAGCRGSLCC…KKGRRYEAVK (80 aa). 2 helical membrane-spanning segments follow: residues 81 to 113 and 128 to 150; these read WMVV…FGVV and LSLL…LVLI. Residues 156-160 carry the Selectivity filter part_1 motif; the sequence is GSGIP. Ser-157 contributes to the chloride binding site. Positions 159 to 166 form an intramembrane region, helical; the sequence is IPEVKCYL. Helical transmembrane passes span 176–194 and 200–217; these read RLRT…VAGG and EGPM…LPQF. The Selectivity filter part_2 motif lies at 198-202; the sequence is EKEGP. 2 consecutive intramembrane regions (helical) follow at residues 241–253 and 257–265; these read FVSA…VAAA and PIGGTLFSL. 3 consecutive transmembrane segments (helical) span residues 277–294, 335–364, and 371–392; these read TWKV…LNFF, GFFV…YRMR, and KLVR…VFVA. N-linked (GlcNAc...) asparagine glycans are attached at residues Asn-410, Asn-422, and Asn-432. The next 2 helical transmembrane spans lie at 462 to 481 and 487 to 511; these read PVTL…WTYG and GLFV…KSYI. The short motif at 487–491 is the Selectivity filter part_3 element; that stretch reads GLFVP. Phe-489 contributes to the chloride binding site. Positions 519–533 form an intramembrane region, helical; that stretch reads GTFALIGAAAFLGGV. An intramembrane region (note=Loop between two helices) is located at residues 534 to 536; sequence VRM. An intramembrane region (helical) is located at residues 537 to 548; the sequence is TISLTVILIEST. An intramembrane region (note=Loop between two helices) is located at residues 549-552; that stretch reads NEIT. The chain crosses the membrane as a helical span at residues 553 to 571; that stretch reads YGLPIMVTLMVAKWTGDFF. Topologically, residues 572–869 are cytoplasmic; that stretch reads NKGIYDIHVG…ARLRQHYQTI (298 aa). A chloride-binding site is contributed by Tyr-576. Positions 605-662 constitute a CBS 1 domain; that stretch reads MEPNLTYVYPHTRIQSLVSILRTTVHHAFPVVTENRGNEKEFMKGNQLISNNIKFKKS. 630 to 632 is a binding site for ATP; it reads HHA. A Phosphoserine modification is found at Ser-773. Residues 807-868 form the CBS 2 domain; it reads MNPSPFTVSP…QARLRQHYQT (62 aa). 849–852 is an ATP binding site; it reads TRHN.

This sequence belongs to the chloride channel (TC 2.A.49) family. ClC-6/CLCN6 subfamily. N-glycosylated on several asparagine residues. In terms of tissue distribution, testis, ovary, small intestine, brain and skeletal muscle. Low level expression in aortic and coronary vascular smooth muscle cells, and aortic endothelial cells. Isoform 3 is only detected in kidney.

The protein resides in the late endosome membrane. The catalysed reaction is 2 chloride(in) + H(+)(out) = 2 chloride(out) + H(+)(in). Voltage-gated channel mediating the exchange of chloride ions against protons. Functions as antiporter and contributes to the acidification of the late endosome lumen. The CLC channel family contains both chloride channels and proton-coupled anion transporters that exchange chloride or another anion for protons. The presence of conserved gating glutamate residues is typical for family members that function as antiporters. This is H(+)/Cl(-) exchange transporter 6 from Homo sapiens (Human).